Consider the following 267-residue polypeptide: Glutamate racemase (267 aa).

Substrate is bound by residues 9-10 and 41-42; these read DS and YG. Cys-72 functions as the Proton donor/acceptor in the catalytic mechanism. 73–74 is a binding site for substrate; it reads NT. The active-site Proton donor/acceptor is the Cys-184. 185 to 186 contributes to the substrate binding site; it reads TH.

The protein belongs to the aspartate/glutamate racemases family.

The enzyme catalyses L-glutamate = D-glutamate. It participates in cell wall biogenesis; peptidoglycan biosynthesis. In terms of biological role, provides the (R)-glutamate required for cell wall biosynthesis. This is Glutamate racemase from Staphylococcus epidermidis (strain ATCC 12228 / FDA PCI 1200).